Consider the following 299-residue polypeptide: Probable inactive heme oxygenase 2, chloroplastic (299 aa).

Over residues 1–15 the composition is skewed to low complexity; the sequence is MASLLRPTPLLSTPR. Disordered stretches follow at residues 1–20, 45–70, and 96–126; these read MASLLRPTPLLSTPRKLTHS, LCRSTPTPSQQKASQRKRTRYRKQYP, and DLSEDKTDTEKEEEEEEEDDDDDDEVKEETW. Residues 1-83 constitute a chloroplast transit peptide; it reads MASLLRPTPL…IGITEEMRFV (83 aa). A compositionally biased stretch (polar residues) spans 46–57; that stretch reads CRSTPTPSQQKA. Basic residues predominate over residues 58–67; sequence SQRKRTRYRK. Acidic residues predominate over residues 105 to 122; sequence EKEEEEEEEDDDDDDEVK.

Belongs to the heme oxygenase family. In terms of tissue distribution, widely expressed at low levels.

The protein resides in the plastid. It localises to the chloroplast. Functionally, probable inactive heme oxygenase. Binds protoporphyrin IX, a precursor for both heme and chlorophyll biosynthesis. Plays a minor role in phytochrome assembly and photomorphogenesis. The polypeptide is Probable inactive heme oxygenase 2, chloroplastic (HO2) (Arabidopsis thaliana (Mouse-ear cress)).